A 557-amino-acid chain; its full sequence is T-complex protein 1 subunit theta-like 2 (557 aa).

2 disordered regions span residues 1–33 (MDST…EPHL) and 531–557 (EIWN…GLNN).

It belongs to the TCP-1 chaperonin family.

The protein localises to the cytoplasm. Possible molecular chaperone; assists the folding of proteins upon ATP hydrolysis. The polypeptide is T-complex protein 1 subunit theta-like 2 (CCT8L2) (Homo sapiens (Human)).